A 463-amino-acid polypeptide reads, in one-letter code: Cytochrome P450 4d8 (463 aa).

2 residues coordinate heme: E267 and C409.

This sequence belongs to the cytochrome P450 family. Heme is required as a cofactor.

It localises to the endoplasmic reticulum membrane. It is found in the microsome membrane. Functionally, may be involved in the metabolism of insect hormones and in the breakdown of synthetic insecticides. This chain is Cytochrome P450 4d8 (Cyp4d8), found in Drosophila melanogaster (Fruit fly).